Here is a 262-residue protein sequence, read N- to C-terminus: Acyl-[acyl-carrier-protein]--UDP-N-acetylglucosamine O-acyltransferase (262 aa).

This sequence belongs to the transferase hexapeptide repeat family. LpxA subfamily. In terms of assembly, homotrimer.

The protein localises to the cytoplasm. The enzyme catalyses a (3R)-hydroxyacyl-[ACP] + UDP-N-acetyl-alpha-D-glucosamine = a UDP-3-O-[(3R)-3-hydroxyacyl]-N-acetyl-alpha-D-glucosamine + holo-[ACP]. It functions in the pathway glycolipid biosynthesis; lipid IV(A) biosynthesis; lipid IV(A) from (3R)-3-hydroxytetradecanoyl-[acyl-carrier-protein] and UDP-N-acetyl-alpha-D-glucosamine: step 1/6. Functionally, involved in the biosynthesis of lipid A, a phosphorylated glycolipid that anchors the lipopolysaccharide to the outer membrane of the cell. This chain is Acyl-[acyl-carrier-protein]--UDP-N-acetylglucosamine O-acyltransferase, found in Shigella dysenteriae serotype 1 (strain Sd197).